Consider the following 262-residue polypeptide: Hydroxyethylthiazole kinase (262 aa).

Met-50 is a substrate binding site. Residues Arg-125 and Thr-171 each contribute to the ATP site. Gly-198 lines the substrate pocket.

The protein belongs to the Thz kinase family. Mg(2+) is required as a cofactor.

The enzyme catalyses 5-(2-hydroxyethyl)-4-methylthiazole + ATP = 4-methyl-5-(2-phosphooxyethyl)-thiazole + ADP + H(+). It participates in cofactor biosynthesis; thiamine diphosphate biosynthesis; 4-methyl-5-(2-phosphoethyl)-thiazole from 5-(2-hydroxyethyl)-4-methylthiazole: step 1/1. Catalyzes the phosphorylation of the hydroxyl group of 4-methyl-5-beta-hydroxyethylthiazole (THZ). The sequence is that of Hydroxyethylthiazole kinase from Escherichia fergusonii (strain ATCC 35469 / DSM 13698 / CCUG 18766 / IAM 14443 / JCM 21226 / LMG 7866 / NBRC 102419 / NCTC 12128 / CDC 0568-73).